The chain runs to 886 residues: Valine--tRNA ligase (886 aa).

A 'HIGH' region motif is present at residues 43 to 53 (PYPTGRMHLGH). The 'KMSKS' region signature appears at 528 to 532 (KMSKS). ATP is bound at residue Lys-531.

It belongs to the class-I aminoacyl-tRNA synthetase family. ValS type 2 subfamily.

It localises to the cytoplasm. It carries out the reaction tRNA(Val) + L-valine + ATP = L-valyl-tRNA(Val) + AMP + diphosphate. Functionally, catalyzes the attachment of valine to tRNA(Val). As ValRS can inadvertently accommodate and process structurally similar amino acids such as threonine, to avoid such errors, it has a 'posttransfer' editing activity that hydrolyzes mischarged Thr-tRNA(Val) in a tRNA-dependent manner. The protein is Valine--tRNA ligase of Methanococcus maripaludis (strain DSM 14266 / JCM 13030 / NBRC 101832 / S2 / LL).